A 294-amino-acid chain; its full sequence is MLENLSTEHRNEKTMNLDEMSIKEVLQSMNEEDRTVALAVEKEIEQIEKVVQTVIKSFEEEGRLIYIGAGTSGRLGILDAVECPPTFGTDDKMVQGFIAGGLKAFTKAVEGAEDREELAEEDLKSIGLNEKDTVIGIAASGRTPYVIGGLKYAQSVGASTASISCNKNAEISKYANLNVEVETGAEILTGSTRLKAGTAQKLVLNMISTASMIGVGKVYKNLMVDVQSTNEKLVERSKRIIVEATGASYEVAAEYYEKAERNVKAAIVMVLLQCEYGEALEKLKYAKGFVKKAL.

The SIS domain maps to 54 to 217 (VIKSFEEEGR…STASMIGVGK (164 aa)). The active-site Proton donor is the Glu-82. The active site involves Glu-113.

The protein belongs to the GCKR-like family. MurNAc-6-P etherase subfamily. In terms of assembly, homodimer.

The catalysed reaction is N-acetyl-D-muramate 6-phosphate + H2O = N-acetyl-D-glucosamine 6-phosphate + (R)-lactate. It functions in the pathway amino-sugar metabolism; N-acetylmuramate degradation. Functionally, specifically catalyzes the cleavage of the D-lactyl ether substituent of MurNAc 6-phosphate, producing GlcNAc 6-phosphate and D-lactate. The protein is N-acetylmuramic acid 6-phosphate etherase of Bacillus cereus (strain ATCC 14579 / DSM 31 / CCUG 7414 / JCM 2152 / NBRC 15305 / NCIMB 9373 / NCTC 2599 / NRRL B-3711).